The following is an 84-amino-acid chain: ICP35 (84 aa).

The polypeptide is ICP35 (Crustacea (WSSV)).